Consider the following 254-residue polypeptide: Triosephosphate isomerase (254 aa).

12–14 (NWK) serves as a coordination point for substrate. The active-site Electrophile is His-99. Glu-169 (proton acceptor) is an active-site residue. Substrate contacts are provided by residues Gly-175, Ser-214, and 235 to 236 (GG).

This sequence belongs to the triosephosphate isomerase family. Homodimer.

It is found in the cytoplasm. It carries out the reaction D-glyceraldehyde 3-phosphate = dihydroxyacetone phosphate. It functions in the pathway carbohydrate biosynthesis; gluconeogenesis. The protein operates within carbohydrate degradation; glycolysis; D-glyceraldehyde 3-phosphate from glycerone phosphate: step 1/1. Involved in the gluconeogenesis. Catalyzes stereospecifically the conversion of dihydroxyacetone phosphate (DHAP) to D-glyceraldehyde-3-phosphate (G3P). The chain is Triosephosphate isomerase from Bartonella bacilliformis (strain ATCC 35685 / KC583 / Herrer 020/F12,63).